The sequence spans 104 residues: Ig lambda-3 chain C region (104 aa).

Positions 6 to 99 (PTLTMFPPSP…EGDTVEKSLS (94 aa)) constitute an Ig-like domain. The cysteines at positions 27 and 85 are disulfide-linked.

The sequence is that of Ig lambda-3 chain C region (Iglc3) from Mus musculus (Mouse).